We begin with the raw amino-acid sequence, 207 residues long: Ras-related protein Rab-8A (207 aa).

GTP-binding residues include Ser17, Gly18, Val19, Gly20, Lys21, Thr22, Cys23, Ser35, Ser39, and Thr40. Thr22 contributes to the Mg(2+) binding site. 2 short sequence motifs (switch) span residues 31–45 (DAFNSTFISTIGIDF) and 63–80 (DTAGQERFRTITTAYYRG). Thr40 and Asp63 together coordinate Mg(2+). Gly66 is a binding site for GTP. Position 72 is a phosphothreonine (Thr72). Residues Asn121, Lys122, Asp124, Ala152, and Lys153 each contribute to the GTP site. Phosphoserine occurs at positions 181 and 185. Cysteine methyl ester is present on Cys204. Cys204 carries S-geranylgeranyl cysteine lipidation. Residues 205–207 (VLL) constitute a propeptide, removed in mature form.

It belongs to the small GTPase superfamily. Rab family. Interacts (GTP-bound form) with MICALL1; regulates RAB8A association with recycling endosomes. Interacts with MICALL2; competes with RAB13 and is involved in E-cadherin endocytic recycling. Interacts (GTP-bound form) with MICAL1, MICALCL, MICAL3, EHBP1 and EHBP1L1; at least in case of MICAL1, MICALCL, MICAL3 and EHBP1L1 two molecules of RAB8A can bind to one molecule of the effector protein; ternary complexes of RAB8A, RAB13 and either MICAL1 or EHBP1L1 are possible. Interacts with EHD1. Interacts with MAP4K2 and SYTL4. Interacts with SGSM1 and SGSM3. Interacts with RABIF, RIMS2, RPH3A and RPH3A. Interacts with OPTN. Interacts with RAB3IP, RAB3IP functions as guanine exchange factor (GEF). Interacts with MYO5B. Interacts with CIMAP3. Interacts with BIRC6/bruce. Interacts with OCRL. Interacts with AHI1. Interacts with DCDC1. Interacts with LRRK2; interaction facilitates phosphorylation of Thr-72. Interacts with RAB31P, GDI1, GDI2, CHM, CHML, RABGGTA, RABGGTB, TBC1D15 and INPP5B; these interactions are dependent on Thr-72 not being phosphorylated. Interacts with RILPL1 and RILPL2; these interactions are dependent on the phosphorylation of Thr-72 by LRRK2. Interacts with DZIP1; prevents inhibition by the GDP-dissociation inhibitor GDI2. Interacts (in GDP-bound form) with RAB3IP/Rabin8, RAB3IP functions as guanine exchange factor (GEF) towards RAB8A. Interacts (in GDP-bound form) with RPGR, RPGR functions as GEF towards RAB8A. Requires Mg(2+) as cofactor. Post-translationally, phosphorylation of Thr-72 in the switch II region by LRRK2 prevents the association of RAB regulatory proteins, including CHM, CHML and RAB GDP dissociation inhibitors GDI1 and GDI2. Phosphorylation by LRRK2 is required for localization to stressed lysosomes.

It is found in the cell membrane. The protein localises to the golgi apparatus. It localises to the endosome membrane. Its subcellular location is the recycling endosome membrane. The protein resides in the cell projection. It is found in the cilium. The protein localises to the cytoplasmic vesicle. It localises to the phagosome membrane. Its subcellular location is the cytoplasm. The protein resides in the cytoskeleton. It is found in the microtubule organizing center. The protein localises to the centrosome. It localises to the centriole. Its subcellular location is the cilium basal body. The protein resides in the midbody. It is found in the lysosome. It carries out the reaction GTP + H2O = GDP + phosphate + H(+). Regulated by guanine nucleotide exchange factors (GEFs) such as RAB3IP/Rabin8 and RPGR which promote the exchange of bound GDP for free GTP, GTPase activating proteins (GAPs) which increase the GTP hydrolysis activity, and GDP dissociation inhibitors (GDIs) which inhibit the dissociation of the nucleotide from the GTPase. Activated in response to insulin. The small GTPases Rab are key regulators of intracellular membrane trafficking, from the formation of transport vesicles to their fusion with membranes. Rabs cycle between an inactive GDP-bound form and an active GTP-bound form that is able to recruit to membranes different sets of downstream effectors directly responsible for vesicle formation, movement, tethering and fusion. RAB8A is involved in polarized vesicular trafficking and neurotransmitter release. Together with RAB11A, RAB3IP, the exocyst complex, PARD3, PRKCI, ANXA2, CDC42 and DNMBP promotes transcytosis of PODXL to the apical membrane initiation sites (AMIS), apical surface formation and lumenogenesis. Regulates the compacted morphology of the Golgi. Together with MYO5B and RAB11A participates in epithelial cell polarization. Also involved in membrane trafficking to the cilium and ciliogenesis. Together with MICALL2, may also regulate adherens junction assembly. May play a role in insulin-induced transport to the plasma membrane of the glucose transporter GLUT4 and therefore play a role in glucose homeostasis. Involved in autophagy. Participates in the export of a subset of neosynthesized proteins through a Rab8-Rab10-Rab11-dependent endososomal export route. Targeted to and stabilized on stressed lysosomes through LRRK2 phosphorylation. Suppresses stress-induced lysosomal enlargement through EHBP1 and EHNP1L1 effector proteins. The chain is Ras-related protein Rab-8A (RAB8A) from Canis lupus familiaris (Dog).